The primary structure comprises 487 residues: uncharacterized protein (487 aa).

It belongs to the UbiD family.

This is an uncharacterized protein from Aeropyrum pernix (strain ATCC 700893 / DSM 11879 / JCM 9820 / NBRC 100138 / K1).